Reading from the N-terminus, the 367-residue chain is MNIKSLLLGSAAALVAASGAQAADAIVAPEPEAVEYVRVCDAYGAGYFYIPGTETCLRVHGYVRYDVKGGDDVYSGTDRNGWDKGARFALMFNTNSETELGTLGTYTQLRFNYTSNNSRHDGQYGDFSDDRDVADGGVSTGTDLQFAYITLGGFKVGIDESEFHTFTGYLGDVINDDVVAAGSYRTGKIAYTFTGGNGFSAVIALEQGGEDVDNDYTIDGYMPHVVGGLKYAGGWGSIAGVVAYDSVIEEWATKVRGDVNITDRFSVWLQGAYSSAATPNQNYGQWGGDWAVWGGAKFIAPEKATFNLQAAHDDWGKTAVTANVAYQLVPGFTITPEVSYTKFGGEWKDTVAEDNAWGGIVRFQRSF.

A signal peptide spans 1 to 22 (MNIKSLLLGSAAALVAASGAQA).

The protein belongs to the alphaproteobacteria porin family. As to quaternary structure, monomer.

It localises to the cell outer membrane. Functionally, forms passive diffusion pores that allow small molecular weight hydrophilic materials across the outer membrane. The polypeptide is Porin Omp2a (omp2a) (Brucella melitensis biotype 1 (strain ATCC 23456 / CCUG 17765 / NCTC 10094 / 16M)).